An 89-amino-acid polypeptide reads, in one-letter code: Small ribosomal subunit protein uS15 (89 aa).

It belongs to the universal ribosomal protein uS15 family. Part of the 30S ribosomal subunit. Forms a bridge to the 50S subunit in the 70S ribosome, contacting the 23S rRNA.

Its function is as follows. One of the primary rRNA binding proteins, it binds directly to 16S rRNA where it helps nucleate assembly of the platform of the 30S subunit by binding and bridging several RNA helices of the 16S rRNA. In terms of biological role, forms an intersubunit bridge (bridge B4) with the 23S rRNA of the 50S subunit in the ribosome. This is Small ribosomal subunit protein uS15 from Salmonella schwarzengrund (strain CVM19633).